Consider the following 84-residue polypeptide: Limulin (84 aa).

The region spanning I6–V84 is the Pentraxin (PTX) domain. Residues D67 and N68 each coordinate Ca(2+).

Belongs to the pentraxin family. In terms of assembly, homopentamer. Pentraxin (or pentaxin) have a discoid arrangement of 5 non-covalently bound subunits. It depends on Ca(2+) as a cofactor. In terms of processing, a disulfide bond links Cys-38 to a Cys in the C-terminal half of the chain of 163 residues.

In terms of biological role, lectin that binds sialic acid. Displays antiviral activity and therefore may contribute to defense against infections. In Limulus polyphemus (Atlantic horseshoe crab), this protein is Limulin.